The sequence spans 23 residues: U1-ctenitoxin-Co1a (23 aa).

Cys-10 and Cys-20 are joined by a disulfide.

In terms of tissue distribution, expressed by the venom gland.

The protein localises to the secreted. In terms of biological role, insecticidal neurotoxin that reversibly inhibits the N-methyl-D-aspartate (NMDA)-subtype of ionotropic glutamate receptor (GRIN) and inhibits inactivation of insect sodium channels (Nav). In vivo, is highly toxic to insects. This is U1-ctenitoxin-Co1a from Ctenus ornatus (Brazilian spider).